A 156-amino-acid polypeptide reads, in one-letter code: Snaclec A12 (156 aa).

The N-terminal stretch at 1–23 (MGRSISVSFGLLVVFLSLSGTGA) is a signal peptide. Disulfide bonds link Cys27/Cys38, Cys55/Cys148, and Cys123/Cys140. The C-type lectin domain occupies 34-149 (YEGHCYKVFN…CELAYHFICM (116 aa)).

The protein belongs to the snaclec family. As to quaternary structure, heterodimer; disulfide-linked. Expressed by the venom gland.

It is found in the secreted. Its function is as follows. Interferes with one step of hemostasis (modulation of platelet aggregation, or coagulation cascade, for example). The sequence is that of Snaclec A12 from Macrovipera lebetinus (Levantine viper).